We begin with the raw amino-acid sequence, 151 residues long: Large ribosomal subunit protein bL9 (151 aa).

The protein belongs to the bacterial ribosomal protein bL9 family.

Its function is as follows. Binds to the 23S rRNA. The protein is Large ribosomal subunit protein bL9 of Rhodococcus jostii (strain RHA1).